The primary structure comprises 537 residues: Oocyte zinc finger protein XlCOF29 (537 aa).

Residues 1-21 (MGMSEKASDTGMKGKKKDKNE) form a disordered region. C2H2-type zinc fingers lie at residues 375–397 (FTCS…LKSH), 403–425 (FSCS…RRLH), 431–453 (FPCA…SKTH), 459–481 (YSCT…KKRH), 487–509 (YTCS…VRIH), and 515–537 (FSCS…ERMH).

Belongs to the krueppel C2H2-type zinc-finger protein family.

Its subcellular location is the nucleus. Functionally, may be involved in transcriptional regulation. This Xenopus laevis (African clawed frog) protein is Oocyte zinc finger protein XlCOF29.